Consider the following 561-residue polypeptide: MNINVADLLNGNYILLLFVVLALGLCLGKLRLGSVQLGNSIGVLVVSLLLGQQHFSINTDALNLGFMLFIFCVGVEAGPNFFSIFFRDGKNYLMLALVMVGSALLIALGLGKLFGWDIGLTAGMLAGSMTSTPVLVGAGDTLRHSGIASTQLSSALDNLSLGYALTYLIGLVSLIVGARYLPKLQHQDLQTSAQQIARERGLDTDANRKVYLPVIRAYRVGPELVAWTDGKNLRELGIYRQTGCYIERIRRNGILANPDGDAVLQMGDEIALVGYPDAHARLDPSFRNGKEVFDRDLLDMRIVTEEIVVKNHNAVGRRLAQLKLTDHGCFLNRVIRSQIEMPIDDNVVLNKGDVLQVSGDARRVKTIADRIGFISIHSQVTDLLAFCAFFIIGLMIGMITFQFSNFSFGIGNAAGLLFAGIMLGFLRANHPTFGYIPQGALNMVKEFGLMVFMAGVGLSAGSGINNGLGAVGGQMLIAGLVVSLVPVVICFLFGAYVLRMNRALLFGAMMGARTCAPAMEIISDTARSNIPALGYAGTYAIANVLLTLAGTLIVIIWPGLG.

5 helical membrane passes run 8 to 28 (LLNG…LCLG), 32 to 52 (LGSV…LLGQ), 66 to 86 (FMLF…SIFF), 94 to 114 (MLAL…GKLF), and 158 to 178 (NLSL…IVGA). 2 consecutive RCK C-terminal domains span residues 200-288 (RGLD…SFRN) and 292-373 (VFDR…RIGF). Helical transmembrane passes span 383–403 (LLAF…TFQF), 406–426 (FSFG…LGFL), 447–467 (FGLM…INNG), 475–495 (MLIA…LFGA), and 540–560 (AIAN…WPGL).

Belongs to the AAE transporter (TC 2.A.81) family. YbjL subfamily.

The protein localises to the cell membrane. The polypeptide is Putative transport protein YbjL (Salmonella paratyphi C (strain RKS4594)).